We begin with the raw amino-acid sequence, 555 residues long: Small ribosomal subunit protein uS3m (555 aa).

Positions 1–20 (MARKGNPISVRLGKNRSSDS) are disordered.

The protein belongs to the universal ribosomal protein uS3 family.

It is found in the mitochondrion. This chain is Small ribosomal subunit protein uS3m (RPS3), found in Brassica napus (Rape).